Reading from the N-terminus, the 385-residue chain is Single-stranded DNA-binding protein 4 (385 aa).

The residue at position 1 (Met-1) is an N-acetylmethionine. The LisH domain maps to Ala-17–Lys-49. 2 disordered regions span residues Phe-122–Glu-287 and Gly-331–Ala-363. Positions Ser-245–Gly-263 are enriched in low complexity. The segment covering Gly-267–Pro-277 has biased composition (pro residues). Phosphoserine is present on Ser-341. Residue Thr-355 is modified to Phosphothreonine.

Its subcellular location is the nucleus. The protein is Single-stranded DNA-binding protein 4 (SSBP4) of Homo sapiens (Human).